A 1034-amino-acid chain; its full sequence is FACT complex subunit spt-16 (1034 aa).

Basic and acidic residues-rich tracts occupy residues 433–448 (EEQENRETERDTDQKK), 463–481 (TRNKTTNEDLRKERQKELG), and 493–503 (SKQDGGTDEKK). Positions 433–511 (EEQENRETER…KKVKKSNVSY (79 aa)) are disordered. Residues 617–642 (LSTAFRQIKEMQKRFRTEEAEEREKD) adopt a coiled-coil conformation. 2 stretches are compositionally biased toward acidic residues: residues 926 to 950 (AESEGEDAGDDSDESDAYDPEEADA) and 959 to 983 (SDEDESEGEETESDDDEEGSLDSDE). The segment at 926 to 1034 (AESEGEDAGD…KAGPSHKRRK (109 aa)) is disordered. A compositionally biased stretch (basic and acidic residues) spans 984–1020 (SEGKDWSDLEEEAAKADKRREVEDGGRDRDRDRDRKR). Residues 1021–1034 (PSSSKAGPSHKRRK) show a composition bias toward basic residues.

This sequence belongs to the peptidase M24 family. SPT16 subfamily. As to quaternary structure, component of the FACT complex, a stable heterodimer of spt-16 and hmg-3 or hmg-4.

The protein localises to the nucleus. Its subcellular location is the chromosome. Component of the FACT complex, a general chromatin factor that acts to reorganize nucleosomes. The FACT complex is involved in multiple processes that require DNA as a template such as mRNA elongation, DNA replication and DNA repair. During transcription elongation the FACT complex acts as a histone chaperone that both destabilizes and restores nucleosomal structure. It facilitates the passage of RNA polymerase II and transcription by promoting the dissociation of one histone H2A-H2B dimer from the nucleosome, then subsequently promotes the reestablishment of the nucleosome following the passage of RNA polymerase II. The sequence is that of FACT complex subunit spt-16 (spt-16) from Caenorhabditis briggsae.